A 306-amino-acid polypeptide reads, in one-letter code: Low-density lipoprotein receptor class A domain-containing protein 4 (306 aa).

Topologically, residues 1 to 64 are lumenal; that stretch reads MPEAGFQATN…PPGIFNSELE (64 aa). Residues 16 to 48 enclose the LDL-receptor class A domain; it reads KFTCTSGKCLYLGSLVCNQQNDCGDNSDEENCL. Disulfide bonds link C19-C38 and C32-C47. A helical membrane pass occupies residues 65 to 85; it reads FAQIIIIVVVVTVMVVVIVCL. Topologically, residues 86-306 are cytoplasmic; that stretch reads LNHYKVSTRS…GKDRKPGNLV (221 aa). A PPxY motif 1 motif is present at residues 180-183; that stretch reads PPPY. Residues 208–211 carry the SMAD interaction motif (SIM) motif; sequence PPNR. The PPxY motif 2 signature appears at 252–255; sequence PPTY. The interval 286-306 is disordered; it reads NNAESTIVPIKGKDRKPGNLV. Positions 296 to 306 are enriched in basic and acidic residues; it reads KGKDRKPGNLV.

This sequence belongs to the PMEPA1 family. As to quaternary structure, interacts with PMEPA1. Interacts (via the SMAD interaction motif) with SMAD2 and SMAD3. Expressed in lymphocytes.

It is found in the early endosome membrane. Functionally, functions as a negative regulator of TGF-beta signaling and thereby probably plays a role in cell proliferation, differentiation, apoptosis, motility, extracellular matrix production and immunosuppression. In the canonical TGF-beta pathway, ZFYVE9/SARA recruits the intracellular signal transducer and transcriptional modulators SMAD2 and SMAD3 to the TGF-beta receptor. Phosphorylated by the receptor, SMAD2 and SMAD3 then form a heteromeric complex with SMAD4 that translocates to the nucleus to regulate transcription. Through interaction with SMAD2 and SMAD3, LDLRAD4 may compete with ZFYVE9 and SMAD4 and prevent propagation of the intracellular signal. This Homo sapiens (Human) protein is Low-density lipoprotein receptor class A domain-containing protein 4 (LDLRAD4).